The chain runs to 590 residues: L-fucose isomerase (590 aa).

Residues Glu337 and Asp361 each act as proton acceptor in the active site. Residues Glu337, Asp361, and His528 each contribute to the Mn(2+) site.

It belongs to the L-fucose isomerase family. Mn(2+) serves as cofactor.

The protein localises to the cytoplasm. It carries out the reaction L-fucose = L-fuculose. It functions in the pathway carbohydrate degradation; L-fucose degradation; L-lactaldehyde and glycerone phosphate from L-fucose: step 1/3. Converts the aldose L-fucose into the corresponding ketose L-fuculose. In Bacteroides fragilis (strain YCH46), this protein is L-fucose isomerase.